An 82-amino-acid chain; its full sequence is Nuclear protein 1 (82 aa).

The interval 1-82 is disordered; it reads MATFPPATSA…SERKKRGARR (82 aa). Residues 17 to 28 are compositionally biased toward acidic residues; it reads PEDEDSSLDESD. The short motif at 65–82 is the Nuclear localization signal element; that stretch reads KLVTKLQNSERKKRGARR.

This sequence belongs to the NUPR family. Monomer. Directly interacts with MSL1 and binds MORF4L1, two components of histone acetyltransferase complex; the interaction with MORF4L1 may be mediated by MSL1. Interacts with EP300; this interaction enhances the effect of EP300 on PAX2 transcription factor activity. Interacts with PAXIP1; this interaction prevents PAXIP1 inhibition of PAX2 transcription factor activity. Interacts with COPS5; this interaction allows COPS5-dependent CDKN1B nuclear to cytoplasm translocation. Interacts with RNF2. Interacts with FOXO3; this interaction represses FOXO3 transactivation. Interacts with PTMA; negatively regulates apoptotic process. Interacts with MYOD1, EP300 and DDX5; this interaction coordinates the association of anti-proliferative and pro-myogenic proteins at the myogenin promoter. Interacts with TP53; interaction is stress-dependent. Forms a complex with EP300 and TP53; this complex binds CDKN1A promoter leading to transcriptional induction of CDKN1A. In terms of processing, phosphorylated in vitro by PKA and CK. Phosphorylation promotes DNA-binding activity. Post-translationally, acetylated by EP300 in vitro. In terms of tissue distribution, widely expressed, with high levels in liver, pancreas, prostate, ovary, colon, thyroid, spinal cord, trachea and adrenal gland, moderate levels in heart, placenta, lung, skeletal muscle, kidney, testis, small intestine, stomach and lymph node, and low levels in brain, spleen, thymus and bone marrow. Not detected in peripheral blood leukocytes.

It localises to the nucleus. The protein resides in the cytoplasm. It is found in the perinuclear region. Functionally, transcription regulator that converts stress signals into a program of gene expression that empowers cells with resistance to the stress induced by a change in their microenvironment. Thereby participates in the regulation of many processes namely cell-cycle, apoptosis, autophagy and DNA repair responses. Controls cell cycle progression and protects cells from genotoxic stress induced by doxorubicin through the complex formation with TP53 and EP300 that binds CDKN1A promoter leading to transcriptional induction of CDKN1A. Protects pancreatic cancer cells from stress-induced cell death by binding the RELB promoter and activating its transcription, leading to IER3 transactivation. Negatively regulates apoptosis through interaction with PTMA. Inhibits autophagy-induced apoptosis in cardiac cells through FOXO3 interaction, inducing cytoplasmic translocation of FOXO3 thereby preventing the FOXO3 association with the pro-autophagic BNIP3 promoter. Inhibits cell growth and facilitates programmed cell death by apoptosis after adriamycin-induced DNA damage through transactivation of TP53. Regulates methamphetamine-induced apoptosis and autophagy through DDIT3-mediated endoplasmic reticulum stress pathway. Participates in DNA repair following gamma-irradiation by facilitating DNA access of the transcription machinery through interaction with MSL1 leading to inhibition of histone H4' Lys-16' acetylation (H4K16ac). Coactivator of PAX2 transcription factor activity, both by recruiting EP300 to increase PAX2 transcription factor activity and by binding PAXIP1 to suppress PAXIP1-induced inhibition on PAX2. Positively regulates cell cycle progression through interaction with COPS5 inducing cytoplasmic translocation of CDKN1B leading to the CDKN1B degradation. Coordinates, through its interaction with EP300, the assiociation of MYOD1, EP300 and DDX5 to the MYOG promoter, leading to inhibition of cell-cycle progression and myogenic differentiation promotion. Negatively regulates beta cell proliferation via inhibition of cell-cycle regulatory genes expression through the suppression of their promoter activities. Also required for LHB expression and ovarian maturation. Exacerbates CNS inflammation and demyelination upon cuprizone treatment. The polypeptide is Nuclear protein 1 (Homo sapiens (Human)).